The following is a 136-amino-acid chain: Ribonuclease YqgF (136 aa).

Belongs to the YqgF nuclease family. As to quaternary structure, monomer; also forms low amounts of dimers. Requires Mn(2+) as cofactor.

Its subcellular location is the cytoplasm. Its function is as follows. Has robust sequence-specific RNase activity, acting as a 5'-3' exo/endonuclease on ssRNA substrates with minimally 3 consecutive adenine bases. Has no detectable nuclease activity on dsRNA, dsDNA or Holliday junction DNA. The polypeptide is Ribonuclease YqgF (Deinococcus radiodurans (strain ATCC 13939 / DSM 20539 / JCM 16871 / CCUG 27074 / LMG 4051 / NBRC 15346 / NCIMB 9279 / VKM B-1422 / R1)).